The following is a 338-amino-acid chain: NLP effector protein 6 (338 aa).

An N-terminal signal peptide occupies residues 1-19; it reads MRFTTIFWISLTVLATVRA. The interval 68 to 119 is disordered; sequence LTLSPSASSPAKRNVTLPPDTTMRPDPRQTEPPTEAPTPASTPAPTPDPGPW. Asn-81 carries an N-linked (GlcNAc...) asparagine glycan. Residues 101 to 117 are compositionally biased toward pro residues; that stretch reads TEAPTPASTPAPTPDPG. The Conserved undecapeptide motif I motif lies at 205-215; the sequence is AIMYSWYFPKD. Residues 222–227 carry the Hepta-peptide GHRHDWE motif II motif; it reads GHRHDW.

Belongs to the Necrosis inducing protein (NPP1) family.

It localises to the secreted. In terms of biological role, secreted effector that contributes strongly to virulence during infection by P.capsici. Causes large necrotic areas in both host C.annuum and non-host N.benthamiana. In Phytophthora capsici, this protein is NLP effector protein 6.